A 1849-amino-acid polypeptide reads, in one-letter code: UPF0606 protein KIAA1549L (1849 aa).

Over residues 1-10 (MDHTASQNAQ) the composition is skewed to polar residues. Disordered regions lie at residues 1-70 (MDHT…LLQL), 142-166 (ATANDSANPLHLSAAPENSRGPALS), 213-242 (PTENHASPSPVPEMPTLPAEGSDGSPPATR), and 529-586 (RHSV…ERNA). Polar residues-rich tracts occupy residues 529 to 541 (RHSVSHPQLQLPN) and 552 to 586 (PGPTSTGSLQEMLSDGTDTGSEISSDINSSPERNA). Positions 958–986 (KFAQTMEQRLQKAFQDAERKVLNTKSNLT) form a coiled coil. Residues 1180 to 1200 (LWIIAAVLAPIAVVTVIIIII) form a helical membrane-spanning segment. Disordered stretches follow at residues 1258 to 1338 (LPIR…EEEG), 1460 to 1546 (SKNR…SQPS), 1656 to 1679 (RSTSDIGSKTRMAESTGPEPAQLH), and 1769 to 1819 (SRYP…APLT). Composition is skewed to polar residues over residues 1290–1319 (PSENGSVISNESGKPSSGRRSPQNVMAQQK), 1463–1482 (RQQMKNSVYRSRQSLNSPSP), and 1537–1546 (ETSTLSSQPS). Composition is skewed to low complexity over residues 1769–1786 (SRYPQSSPSRLPRQYSQP) and 1795–1809 (QAPAPSTAASQQSLA).

Belongs to the UPF0606 family.

It is found in the membrane. The protein is UPF0606 protein KIAA1549L (KIAA1549L) of Homo sapiens (Human).